The primary structure comprises 20 residues: Chemoheterotroph-specific protein (20 aa).

The chain is Chemoheterotroph-specific protein from Thiomonas delicata (Thiomonas cuprina).